The primary structure comprises 125 residues: Snaclec B7 (125 aa).

3 cysteine pairs are disulfide-bonded: Cys2–Cys13, Cys30–Cys119, and Cys96–Cys111. The C-type lectin domain maps to 9–120 (HEGHCYKVFK…CNISQYFVCQ (112 aa)). Asn112 is a glycosylation site (N-linked (GlcNAc...) asparagine).

It belongs to the snaclec family. Heterodimer; disulfide-linked. In terms of tissue distribution, expressed by the venom gland.

The protein resides in the secreted. Functionally, interferes with one step of hemostasis (modulation of platelet aggregation, or coagulation cascade, for example). The sequence is that of Snaclec B7 from Macrovipera lebetinus (Levantine viper).